The chain runs to 438 residues: MFLPQEFIRRKRDGQPLDRDDMAAFVRGVTDGSVTEGQVAAFAMAVYFNDLSTDERVALTLAQRDSGDVLDWRALDLGGPVIDKHSTGGVGDVVSLMLGPMVAACGGYVPMISGRGLGHTGGTLDKLSAIPGYDVMPDTDAFRRTVREVGVAIIGQTARLAPADKRIYAIRDVTATVESVAMITASILSKKLAAGLDGLVMDVKVGSGAFMPTAEKSAELARSIVDVGNGAGMKTTAILTDMNQSLAPCAGNALEVACAIDYLTGKSRPARLHDVTMALSAELLVTGGLARDAAHAREKLQQALDSGAAAERFARMVAALGGPADLLDAPARHLARAAVIVPVPAPVSGVVQRVDCRALGLAVVALGGGRTRAEDAIDVSVGLSALAEIGQRIEAGEPLGFVHARDEAAAAHAVDAIRRGYVLGETGEAPPTLYQRVD.

The protein belongs to the thymidine/pyrimidine-nucleoside phosphorylase family. As to quaternary structure, homodimer.

It carries out the reaction thymidine + phosphate = 2-deoxy-alpha-D-ribose 1-phosphate + thymine. Its pathway is pyrimidine metabolism; dTMP biosynthesis via salvage pathway; dTMP from thymine: step 1/2. Functionally, the enzymes which catalyze the reversible phosphorolysis of pyrimidine nucleosides are involved in the degradation of these compounds and in their utilization as carbon and energy sources, or in the rescue of pyrimidine bases for nucleotide synthesis. This is Thymidine phosphorylase from Burkholderia orbicola (strain AU 1054).